The primary structure comprises 98 residues: Large ribosomal subunit protein uL23 (98 aa).

Belongs to the universal ribosomal protein uL23 family. In terms of assembly, part of the 50S ribosomal subunit. Contacts protein L29, and trigger factor when it is bound to the ribosome.

Its function is as follows. One of the early assembly proteins it binds 23S rRNA. One of the proteins that surrounds the polypeptide exit tunnel on the outside of the ribosome. Forms the main docking site for trigger factor binding to the ribosome. This is Large ribosomal subunit protein uL23 from Lactobacillus gasseri (strain ATCC 33323 / DSM 20243 / BCRC 14619 / CIP 102991 / JCM 1131 / KCTC 3163 / NCIMB 11718 / NCTC 13722 / AM63).